Consider the following 874-residue polypeptide: Alanine--tRNA ligase (874 aa).

Zn(2+)-binding residues include H563, H567, C665, and H669.

The protein belongs to the class-II aminoacyl-tRNA synthetase family. It depends on Zn(2+) as a cofactor.

It is found in the cytoplasm. It catalyses the reaction tRNA(Ala) + L-alanine + ATP = L-alanyl-tRNA(Ala) + AMP + diphosphate. Functionally, catalyzes the attachment of alanine to tRNA(Ala) in a two-step reaction: alanine is first activated by ATP to form Ala-AMP and then transferred to the acceptor end of tRNA(Ala). Also edits incorrectly charged Ser-tRNA(Ala) and Gly-tRNA(Ala) via its editing domain. The sequence is that of Alanine--tRNA ligase from Actinobacillus pleuropneumoniae serotype 3 (strain JL03).